The chain runs to 39 residues: Phospholipase A2 (39 aa).

The Ca(2+) site is built by tryptophan 10, glycine 12, and glycine 14. A disulfide bridge links cysteine 11 with cysteine 33. Histidine 36 is a catalytic residue. Position 37 (aspartate 37) interacts with Ca(2+).

It depends on Ca(2+) as a cofactor. In terms of tissue distribution, expressed uniformly in tentacles (at protein level).

Its subcellular location is the secreted. The protein localises to the nematocyst. The catalysed reaction is a 1,2-diacyl-sn-glycero-3-phosphocholine + H2O = a 1-acyl-sn-glycero-3-phosphocholine + a fatty acid + H(+). Inhibited by morin and p-BPB. PA2 catalyzes the calcium-dependent hydrolysis of the 2-acyl groups in 3-sn-phosphoglycerides. Induces insulin secretion in isolated rat islets under high glucose concentration conditions, but not under low glucose concentration conditions. Increases perfusion pressure, renal vascular resistance, urinary flow, glomerular filtration rate, and potassium, sodium, and chloride excretion levels in rat kidney. Does not increase perfusion pressure in the rat mesenteric vascular bed. This chain is Phospholipase A2, found in Bunodosoma caissarum (Sea anemone).